Consider the following 125-residue polypeptide: Small ribosomal subunit protein uS12m (125 aa).

The interval Met1–Lys51 is disordered. Residues His10 to Ala23 are compositionally biased toward basic and acidic residues.

It belongs to the universal ribosomal protein uS12 family.

It localises to the mitochondrion. In terms of biological role, protein S12 is involved in the translation initiation step. The sequence is that of Small ribosomal subunit protein uS12m (RPS12) from Nicotiana sylvestris (Wood tobacco).